The primary structure comprises 330 residues: Ribose-phosphate pyrophosphokinase (330 aa).

Residues 40-42 (DGE) and 99-100 (RQ) contribute to the ATP site. Residues His133 and Asp174 each coordinate Mg(2+). Lys197 is a catalytic residue. D-ribose 5-phosphate-binding positions include Arg199, Asp223, and 227-231 (DTGGT).

This sequence belongs to the ribose-phosphate pyrophosphokinase family. Class I subfamily. As to quaternary structure, homohexamer. It depends on Mg(2+) as a cofactor.

It is found in the cytoplasm. It carries out the reaction D-ribose 5-phosphate + ATP = 5-phospho-alpha-D-ribose 1-diphosphate + AMP + H(+). It participates in metabolic intermediate biosynthesis; 5-phospho-alpha-D-ribose 1-diphosphate biosynthesis; 5-phospho-alpha-D-ribose 1-diphosphate from D-ribose 5-phosphate (route I): step 1/1. Its function is as follows. Involved in the biosynthesis of the central metabolite phospho-alpha-D-ribosyl-1-pyrophosphate (PRPP) via the transfer of pyrophosphoryl group from ATP to 1-hydroxyl of ribose-5-phosphate (Rib-5-P). The sequence is that of Ribose-phosphate pyrophosphokinase from Ureaplasma parvum serovar 3 (strain ATCC 700970).